Consider the following 286-residue polypeptide: uncharacterized protein (286 aa).

In terms of domain architecture, Integrase catalytic spans 1–146; it reads MSRYKKDNDG…KPVDVERGDF (146 aa). Basic residues predominate over residues 252–263; that stretch reads RKVKAKKGKKDK. The disordered stretch occupies residues 252-286; it reads RKVKAKKGKKDKKLKESKKSDDTSTGASTGSSIAM. The span at 264-273 shows a compositional bias: basic and acidic residues; the sequence is KLKESKKSDD. The span at 274-286 shows a compositional bias: low complexity; that stretch reads TSTGASTGSSIAM.

This is an uncharacterized protein from Caenorhabditis elegans.